We begin with the raw amino-acid sequence, 382 residues long: MVRSPPTDSVGLVTQHKATFEEPLPLVCGRELPRYELVYETYGELNREGTNAILVCHALSGNHHAAGYHSEHDRKPGWWETCIGPGKPLDTNRFFVVCSNNLGGCHGSTGPASINPETGKPYGDQFPIVTVRDWVRSQARLADELGIRQWAAVAGGSLGGMQAMQWAIDYPERLRHAIVIAAAPRLSAQNIGFNEVARQAIMSDPEFHGGRYYDYGVSPRRGLAVARMLGHITYLSDDAMRAKFGRDLRGDMSFDFEQVDFEVESYLRYQGQRFVQDFDANTYLLMTKALDYFDPAADHDDDFSAALAHIQCSTLLLSFSSDWRFAPARSREILRALLEHNKPVSYMEIEATQGHDAFLMPIQRYLEAFSAYMGNVAREVGA.

An AB hydrolase-1 domain is found at 51–359; that stretch reads NAILVCHALS…EATQGHDAFL (309 aa). Ser-157 acts as the Nucleophile in catalysis. Residue Arg-227 coordinates substrate. Active-site residues include Asp-322 and His-355. Substrate is bound at residue Asp-356.

This sequence belongs to the AB hydrolase superfamily. MetX family. Homodimer.

Its subcellular location is the cytoplasm. It carries out the reaction L-homoserine + succinyl-CoA = O-succinyl-L-homoserine + CoA. The protein operates within amino-acid biosynthesis; L-methionine biosynthesis via de novo pathway; O-succinyl-L-homoserine from L-homoserine: step 1/1. Transfers a succinyl group from succinyl-CoA to L-homoserine, forming succinyl-L-homoserine. The sequence is that of Homoserine O-succinyltransferase from Halorhodospira halophila (strain DSM 244 / SL1) (Ectothiorhodospira halophila (strain DSM 244 / SL1)).